The primary structure comprises 282 residues: Pantothenate synthetase (282 aa).

Residue 30–37 participates in ATP binding; the sequence is MGYLHEGH. His37 serves as the catalytic Proton donor. Residue Gln61 participates in (R)-pantoate binding. Gln61 serves as a coordination point for beta-alanine. 147–150 is an ATP binding site; sequence GMKD. Gln153 is a binding site for (R)-pantoate. Residues Val176 and 184 to 187 each bind ATP; that span reads KSSR.

The protein belongs to the pantothenate synthetase family. Homodimer.

The protein localises to the cytoplasm. The enzyme catalyses (R)-pantoate + beta-alanine + ATP = (R)-pantothenate + AMP + diphosphate + H(+). Its pathway is cofactor biosynthesis; (R)-pantothenate biosynthesis; (R)-pantothenate from (R)-pantoate and beta-alanine: step 1/1. In terms of biological role, catalyzes the condensation of pantoate with beta-alanine in an ATP-dependent reaction via a pantoyl-adenylate intermediate. The polypeptide is Pantothenate synthetase (Bacillus cereus (strain AH187)).